We begin with the raw amino-acid sequence, 1238 residues long: MPAPHRLYPRSLICLAQALLAWALLAWAPAQASQELTLVGKAAVPDVEIALDGDDWRWLARKRVLTLGVYAPDIPPFDVTYDERYEGLTADYMAIIAHNLGVQAKVLRYPTREQAVGALESGQIDLIGTVNGIEGRLQSLRLSVPYAADHPVLVMPIGARRAPPADLAGQRLAVDANYLPRETLQQAYPQATLHYFPSSEQALAAVAYGQADVFIGDALTTSHLVSQSYFNDVRVVAPAQIVTGGESFGVRADNTRLLRVVNAVLEAIPASERRSLIYRWGLGSSISLDFARPAYSAREQQWMANHPVVKVAVLNLFAPFTLFRTDEQFGGISAAVLQLLQLRTGLDFQIIGVDTVEELIAKLRSGEADMAGALFVNAARESVLSFSRPYVRNGMVIVTRQDPAAPADADHLDGRTIAMVRNSAAIPLLQQRYPQAKVVTADNPTEAMLLVADGQADAVVQTQISASYYVNRYFAGKLRIASALDLPPAEIALATARGQTELISILNKALYSISNDELASIVSRWRGSDGDPRTWYAYRNEIYLLIGLGLLSALLFLSWIVYLRRQIRQRKRAERALNDQLEFMRVLIDGTPNPIYVRDKEGRMLLCNDAYLDTFGVTADAVLGKTIPEANVVGDPALAREMHEFLLTRMSAEREPRFEDRDVTLHGRTRHVYQWTVPYGDSLGELKGIIGGWIDITERAELLRELHDAKESADAANRAKTTFLATMSHEIRTPMNAIIGMLELALLRPADQEPDRQSIQVAYDSARSLLELIGDILDIAKIEAGKFDLAPVRTALRALPEGAIRVFDGLARQKGIELVLKTDIVGVDDVLIDPLRMKQVLSNLVGNAIKFTTEGQVVLTVTARPDGEAAHVQFSVSDTGCGISEADQRQLFKPFSQVGGSAEAGPAPGTGLGLSISRRLVELMGGTLVMRSAPGVGTTVSVDLRLTMVEKSAQATPPAAAAQATPSKPQVSLRVLVVDDHKPNLMLLRQQLDYLGQRVVAADSGEAALALWHEHAFDVVITDCNMPGINGYELARRIRAAEAAPGYGRTRCILFGFTASAQMDEAQRCRAAGMDDCLFKPIGVDALRQRLNEAAARAALPTPPSPQAAAPATHDATPAAFSAESILALTQNDEALIRQLLEELIRTNRADVDQLQKLHQQADWPKVSDMAHRLAGGARVVDAKAMIDTALALEKKAQGQAGPSPEIDGMVRTLAAQSAALETQLRAWLEQRPHQGQP.

Residues 1–30 (MPAPHRLYPRSLICLAQALLAWALLAWAPA) form the signal peptide. Over 33 to 307 (SQELTLVGKA…REQQWMANHP (275 aa)) the chain is Cytoplasmic. The chain crosses the membrane as a helical span at residues 308–331 (VVKVAVLNLFAPFTLFRTDEQFGG). Residues 332–541 (ISAAVLQLLQ…PRTWYAYRNE (210 aa)) are Periplasmic-facing. The helical transmembrane segment at 542-563 (IYLLIGLGLLSALLFLSWIVYL) threads the bilayer. Topologically, residues 564 to 1238 (RRQIRQRKRA…LEQRPHQGQP (675 aa)) are cytoplasmic. The PAS domain maps to 580–651 (QLEFMRVLID…MHEFLLTRMS (72 aa)). Residues 652–708 (AEREPRFEDRDVTLHGRTRHVYQWTVPYGDSLGELKGIIGGWIDITERAELLRELHD) enclose the PAC domain. Residues 726–948 (TMSHEIRTPM…TVSVDLRLTM (223 aa)) enclose the Histidine kinase domain. Position 729 is a phosphohistidine; by autocatalysis (His-729). Positions 974 to 1095 (RVLVVDDHKP…ALRQRLNEAA (122 aa)) constitute a Response regulatory domain. Asp-1023 is subject to 4-aspartylphosphate. The region spanning 1133–1228 (DEALIRQLLE…AALETQLRAW (96 aa)) is the HPt domain. Residue His-1172 is modified to Phosphohistidine.

Post-translationally, activation requires a sequential transfer of a phosphate group from a His in the primary transmitter domain, to an Asp in the receiver domain and to a His in the secondary transmitter domain.

It localises to the cell inner membrane. The enzyme catalyses ATP + protein L-histidine = ADP + protein N-phospho-L-histidine.. In terms of biological role, member of the two-component regulatory system BvgS/BvgA. Phosphorylates BvgA via a four-step phosphorelay in response to environmental signals. The chain is Virulence sensor protein BvgS (bvgS) from Bordetella bronchiseptica (strain ATCC BAA-588 / NCTC 13252 / RB50) (Alcaligenes bronchisepticus).